The primary structure comprises 227 residues: Cytochrome c oxidase subunit 2 (227 aa).

Residues 1–14 (MAYPFQLGLQDATS) are Mitochondrial intermembrane-facing. A helical transmembrane segment spans residues 15-45 (PIMEELTNFHDHTLMIVFLISSLVLYIISLM). Residues 46 to 59 (LTTKLTHTSTMDAQ) are Mitochondrial matrix-facing. A helical transmembrane segment spans residues 60–87 (EVETIWTILPAVILILIALPSLRILYMM). Topologically, residues 88-227 (DEINNPALTV…YFENWSASMI (140 aa)) are mitochondrial intermembrane. Cu cation contacts are provided by histidine 161, cysteine 196, glutamate 198, cysteine 200, histidine 204, and methionine 207. Glutamate 198 provides a ligand contact to Mg(2+). Residue tyrosine 218 is modified to Phosphotyrosine.

It belongs to the cytochrome c oxidase subunit 2 family. As to quaternary structure, component of the cytochrome c oxidase (complex IV, CIV), a multisubunit enzyme composed of 14 subunits. The complex is composed of a catalytic core of 3 subunits MT-CO1, MT-CO2 and MT-CO3, encoded in the mitochondrial DNA, and 11 supernumerary subunits COX4I, COX5A, COX5B, COX6A, COX6B, COX6C, COX7A, COX7B, COX7C, COX8 and NDUFA4, which are encoded in the nuclear genome. The complex exists as a monomer or a dimer and forms supercomplexes (SCs) in the inner mitochondrial membrane with NADH-ubiquinone oxidoreductase (complex I, CI) and ubiquinol-cytochrome c oxidoreductase (cytochrome b-c1 complex, complex III, CIII), resulting in different assemblies (supercomplex SCI(1)III(2)IV(1) and megacomplex MCI(2)III(2)IV(2)). Found in a complex with TMEM177, COA6, COX18, COX20, SCO1 and SCO2. Interacts with TMEM177 in a COX20-dependent manner. Interacts with COX20. Interacts with COX16. The cofactor is Cu cation.

Its subcellular location is the mitochondrion inner membrane. The enzyme catalyses 4 Fe(II)-[cytochrome c] + O2 + 8 H(+)(in) = 4 Fe(III)-[cytochrome c] + 2 H2O + 4 H(+)(out). Its function is as follows. Component of the cytochrome c oxidase, the last enzyme in the mitochondrial electron transport chain which drives oxidative phosphorylation. The respiratory chain contains 3 multisubunit complexes succinate dehydrogenase (complex II, CII), ubiquinol-cytochrome c oxidoreductase (cytochrome b-c1 complex, complex III, CIII) and cytochrome c oxidase (complex IV, CIV), that cooperate to transfer electrons derived from NADH and succinate to molecular oxygen, creating an electrochemical gradient over the inner membrane that drives transmembrane transport and the ATP synthase. Cytochrome c oxidase is the component of the respiratory chain that catalyzes the reduction of oxygen to water. Electrons originating from reduced cytochrome c in the intermembrane space (IMS) are transferred via the dinuclear copper A center (CU(A)) of subunit 2 and heme A of subunit 1 to the active site in subunit 1, a binuclear center (BNC) formed by heme A3 and copper B (CU(B)). The BNC reduces molecular oxygen to 2 water molecules using 4 electrons from cytochrome c in the IMS and 4 protons from the mitochondrial matrix. This chain is Cytochrome c oxidase subunit 2 (MT-CO2), found in Oenomys hypoxanthus (Rufous-nosed rat).